The following is a 433-amino-acid chain: Keratin, type I cytoskeletal 47 kDa (433 aa).

The tract at residues 1-73 (MSYSTRSISQ…AFNVSVTSNN (73 aa)) is head. The interval 74-109 (GKETMQNLNDRLANYLDRVRSLEQANHELELKIREY) is coil 1A. Residues 74–385 (GKETMQNLND…RLLEGEDTRF (312 aa)) form the IF rod domain. Residues 110–127 (LDKKAAVGSLDYSGYYNT) are linker 1. The segment at 128–219 (INLLRSQIND…KNHEEELAVV (92 aa)) is coil 1B. The linker 12 stretch occupies residues 220–242 (RSSARGNVDVQVDSAPPVDLAQI). A coil 2 region spans residues 243 to 381 (MADVRSQYES…ATYRRLLEGE (139 aa)). A tail region spans residues 382-433 (DTRFSQTETQKAVTIVSKEQSSSSIKKVKTVIEEVVDGKVVSSRVEELTETS).

It belongs to the intermediate filament family. In terms of assembly, heterotetramer of two type I and two type II keratins.

This Xenopus laevis (African clawed frog) protein is Keratin, type I cytoskeletal 47 kDa (xk70a).